We begin with the raw amino-acid sequence, 286 residues long: 33 kDa chaperonin (286 aa).

Disulfide bonds link cysteine 236–cysteine 238 and cysteine 264–cysteine 267.

Belongs to the HSP33 family. Post-translationally, under oxidizing conditions two disulfide bonds are formed involving the reactive cysteines. Under reducing conditions zinc is bound to the reactive cysteines and the protein is inactive.

Its subcellular location is the cytoplasm. In terms of biological role, redox regulated molecular chaperone. Protects both thermally unfolding and oxidatively damaged proteins from irreversible aggregation. Plays an important role in the bacterial defense system toward oxidative stress. The chain is 33 kDa chaperonin from Carboxydothermus hydrogenoformans (strain ATCC BAA-161 / DSM 6008 / Z-2901).